We begin with the raw amino-acid sequence, 419 residues long: DNA ligase (419 aa).

Residues 1–120 (MLNHFPGHCS…ARQKRGAHTN (120 aa)) form an NTD region. The segment at 121 to 317 (RGMIPPMLVK…NYHSAHLAKL (197 aa)) is AD domain. The active-site N6-AMP-lysine intermediate is Lys151. ATP contacts are provided by Lys151, Glu203, and Phe232. Glu203 lines the a divalent metal cation pocket. Glu291 contacts a divalent metal cation. 2 residues coordinate ATP: Ile294 and Lys316. An OB domain region spans residues 318-419 (KPLLDAEFIL…REPINVLEII (102 aa)).

Belongs to the ATP-dependent DNA ligase family.

It localises to the virion. The catalysed reaction is ATP + (deoxyribonucleotide)n-3'-hydroxyl + 5'-phospho-(deoxyribonucleotide)m = (deoxyribonucleotide)n+m + AMP + diphosphate.. In terms of biological role, very low-fidelity DNA ligase that seals nicks in double-stranded DNA during DNA repair. Together with the viral repair DNA polymerase X, fills the single nucleotide gaps generated by the AP endonuclease. It is not essential for viral replication and recombination. Displays a very low adenylation activity towards DNA with 3'-dideoxy- or 3'-amino-terminated nicks compared to regular nick DNA. The polypeptide is DNA ligase (African swine fever virus (isolate Tick/South Africa/Pretoriuskop Pr4/1996) (ASFV)).